Here is an 864-residue protein sequence, read N- to C-terminus: Leucine--tRNA ligase (864 aa).

The short motif at 42-52 (PYPSGKLHMGH) is the 'HIGH' region element. The short motif at 619–623 (KMSKS) is the 'KMSKS' region element. An ATP-binding site is contributed by Lys-622.

This sequence belongs to the class-I aminoacyl-tRNA synthetase family.

The protein resides in the cytoplasm. It catalyses the reaction tRNA(Leu) + L-leucine + ATP = L-leucyl-tRNA(Leu) + AMP + diphosphate. The polypeptide is Leucine--tRNA ligase (Wigglesworthia glossinidia brevipalpis).